The primary structure comprises 318 residues: Taste receptor type 2 member 60 (318 aa).

At methionine 1–valine 7 the chain is on the extracellular side. The helical transmembrane segment at leucine 8–cysteine 28 threads the bilayer. The Cytoplasmic portion of the chain corresponds to leucine 29–alanine 40. The helical transmembrane segment at alanine 41–serine 61 threads the bilayer. The Extracellular segment spans residues leucine 62 to proline 88. The chain crosses the membrane as a helical span at residues tyrosine 89 to tryptophan 109. Residues phenylalanine 110–proline 128 lie on the Cytoplasmic side of the membrane. A helical transmembrane segment spans residues valine 129 to valine 149. Over glycine 150 to asparagine 183 the chain is Extracellular. N-linked (GlcNAc...) asparagine glycosylation occurs at asparagine 179. The helical transmembrane segment at serine 184–methionine 204 threads the bilayer. Over proline 205 to phenylalanine 234 the chain is Cytoplasmic. The helical transmembrane segment at arginine 235–leucine 255 threads the bilayer. Topologically, residues phenylalanine 256 to valine 264 are extracellular. The helical transmembrane segment at phenylalanine 265–isoleucine 285 threads the bilayer. Residues tyrosine 286 to proline 318 are Cytoplasmic-facing.

This sequence belongs to the G-protein coupled receptor T2R family.

It localises to the membrane. Its function is as follows. Receptor that may play a role in the perception of bitterness and is gustducin-linked. May play a role in sensing the chemical composition of the gastrointestinal content. The activity of this receptor may stimulate alpha gustducin, mediate PLC-beta-2 activation and lead to the gating of TRPM5. This chain is Taste receptor type 2 member 60 (TAS2R60), found in Pongo pygmaeus (Bornean orangutan).